We begin with the raw amino-acid sequence, 460 residues long: Bifunctional protein GlmU (460 aa).

The interval Met-1–Pro-237 is pyrophosphorylase. UDP-N-acetyl-alpha-D-glucosamine-binding positions include Leu-13–Gly-16, Lys-27, Gln-78, and Gly-83–Thr-84. Asp-109 provides a ligand contact to Mg(2+). The UDP-N-acetyl-alpha-D-glucosamine site is built by Gly-146, Glu-160, Asn-177, and Asn-235. Residue Asn-235 coordinates Mg(2+). Positions Ala-238–Asn-258 are linker. Residues Gly-259–Ser-460 form an N-acetyltransferase region. Arg-341 and Lys-359 together coordinate UDP-N-acetyl-alpha-D-glucosamine. Residue His-371 is the Proton acceptor of the active site. 2 residues coordinate UDP-N-acetyl-alpha-D-glucosamine: Tyr-374 and Asn-385. Acetyl-CoA contacts are provided by residues Ala-388, Asn-394 to Tyr-395, Ser-413, Ala-431, and Arg-448.

In the N-terminal section; belongs to the N-acetylglucosamine-1-phosphate uridyltransferase family. This sequence in the C-terminal section; belongs to the transferase hexapeptide repeat family. Homotrimer. It depends on Mg(2+) as a cofactor.

It is found in the cytoplasm. The catalysed reaction is alpha-D-glucosamine 1-phosphate + acetyl-CoA = N-acetyl-alpha-D-glucosamine 1-phosphate + CoA + H(+). It carries out the reaction N-acetyl-alpha-D-glucosamine 1-phosphate + UTP + H(+) = UDP-N-acetyl-alpha-D-glucosamine + diphosphate. Its pathway is nucleotide-sugar biosynthesis; UDP-N-acetyl-alpha-D-glucosamine biosynthesis; N-acetyl-alpha-D-glucosamine 1-phosphate from alpha-D-glucosamine 6-phosphate (route II): step 2/2. The protein operates within nucleotide-sugar biosynthesis; UDP-N-acetyl-alpha-D-glucosamine biosynthesis; UDP-N-acetyl-alpha-D-glucosamine from N-acetyl-alpha-D-glucosamine 1-phosphate: step 1/1. It functions in the pathway bacterial outer membrane biogenesis; LPS lipid A biosynthesis. In terms of biological role, catalyzes the last two sequential reactions in the de novo biosynthetic pathway for UDP-N-acetylglucosamine (UDP-GlcNAc). The C-terminal domain catalyzes the transfer of acetyl group from acetyl coenzyme A to glucosamine-1-phosphate (GlcN-1-P) to produce N-acetylglucosamine-1-phosphate (GlcNAc-1-P), which is converted into UDP-GlcNAc by the transfer of uridine 5-monophosphate (from uridine 5-triphosphate), a reaction catalyzed by the N-terminal domain. This is Bifunctional protein GlmU from Oleidesulfovibrio alaskensis (strain ATCC BAA-1058 / DSM 17464 / G20) (Desulfovibrio alaskensis).